A 620-amino-acid polypeptide reads, in one-letter code: Glutathione-regulated potassium-efflux system protein KefC (620 aa).

12 helical membrane-spanning segments follow: residues His-4–Val-24, Leu-26–Leu-46, Ser-54–Leu-74, Gly-90–Leu-110, Val-114–Met-134, Phe-149–Leu-169, Met-178–Leu-198, Val-218–Gly-238, Gly-270–Leu-290, Leu-294–Ile-314, Trp-327–Gln-347, and Ser-359–Asn-379. An RCK N-terminal domain is found at Gln-399–Thr-518. The disordered stretch occupies residues Gly-597–Ser-620.

This sequence belongs to the monovalent cation:proton antiporter 2 (CPA2) transporter (TC 2.A.37) family. KefC subfamily. In terms of assembly, homodimer. Interacts with the regulatory subunit KefF.

It localises to the cell inner membrane. Its function is as follows. Pore-forming subunit of a potassium efflux system that confers protection against electrophiles. Catalyzes K(+)/H(+) antiport. The chain is Glutathione-regulated potassium-efflux system protein KefC from Escherichia coli O127:H6 (strain E2348/69 / EPEC).